A 445-amino-acid polypeptide reads, in one-letter code: uncharacterized protein (445 aa).

This is an uncharacterized protein from Xanthomonas euvesicatoria.